Here is a 331-residue protein sequence, read N- to C-terminus: L-lactate dehydrogenase A chain (331 aa).

Residues 29-57 and Arg-98 each bind NAD(+); that span reads GMVG…MEDK. Residues Arg-105, Asn-137, and Arg-168 each coordinate substrate. Asn-137 serves as a coordination point for NAD(+). Catalysis depends on His-192, which acts as the Proton acceptor. Substrate is bound at residue Thr-247.

It belongs to the LDH/MDH superfamily. LDH family. Homotetramer.

It is found in the cytoplasm. It catalyses the reaction (S)-lactate + NAD(+) = pyruvate + NADH + H(+). It functions in the pathway fermentation; pyruvate fermentation to lactate; (S)-lactate from pyruvate: step 1/1. Its function is as follows. Interconverts simultaneously and stereospecifically pyruvate and lactate with concomitant interconversion of NADH and NAD(+). This Gobionotothen gibberifrons (Humped rockcod) protein is L-lactate dehydrogenase A chain (ldha).